The sequence spans 338 residues: Anthranilate phosphoribosyltransferase (338 aa).

Residues Gly81, 84-85 (GD), Thr89, 91-94 (NIST), 109-117 (KHGNRAVSS), and Ser121 each bind 5-phospho-alpha-D-ribose 1-diphosphate. Gly81 is an anthranilate binding site. Ser93 is a binding site for Mg(2+). Asn112 serves as a coordination point for anthranilate. Arg167 serves as a coordination point for anthranilate. Residues Asp226 and Glu227 each contribute to the Mg(2+) site.

This sequence belongs to the anthranilate phosphoribosyltransferase family. As to quaternary structure, homodimer. Requires Mg(2+) as cofactor.

The enzyme catalyses N-(5-phospho-beta-D-ribosyl)anthranilate + diphosphate = 5-phospho-alpha-D-ribose 1-diphosphate + anthranilate. It functions in the pathway amino-acid biosynthesis; L-tryptophan biosynthesis; L-tryptophan from chorismate: step 2/5. In terms of biological role, catalyzes the transfer of the phosphoribosyl group of 5-phosphorylribose-1-pyrophosphate (PRPP) to anthranilate to yield N-(5'-phosphoribosyl)-anthranilate (PRA). This Myxococcus xanthus (strain DK1622) protein is Anthranilate phosphoribosyltransferase.